The chain runs to 406 residues: Tryptophan 2,3-dioxygenase (406 aa).

Ser19 is modified (phosphoserine). Residues 72-76 (FIITH) and Arg144 each bind substrate. His328 lines the heme pocket. A substrate-binding site is contributed by Thr342.

Belongs to the tryptophan 2,3-dioxygenase family. Homotetramer. Dimer of dimers. Heme serves as cofactor. As to expression, liver.

It carries out the reaction L-tryptophan + O2 = N-formyl-L-kynurenine. The protein operates within amino-acid degradation; L-tryptophan degradation via kynurenine pathway; L-kynurenine from L-tryptophan: step 1/2. In terms of biological role, heme-dependent dioxygenase that catalyzes the oxidative cleavage of the L-tryptophan (L-Trp) pyrrole ring and converts L-tryptophan to N-formyl-L-kynurenine. Catalyzes the oxidative cleavage of the indole moiety. The polypeptide is Tryptophan 2,3-dioxygenase (Rattus norvegicus (Rat)).